Reading from the N-terminus, the 156-residue chain is Small ribosomal subunit protein uS7 (156 aa).

Belongs to the universal ribosomal protein uS7 family. In terms of assembly, part of the 30S ribosomal subunit. Contacts proteins S9 and S11.

In terms of biological role, one of the primary rRNA binding proteins, it binds directly to 16S rRNA where it nucleates assembly of the head domain of the 30S subunit. Is located at the subunit interface close to the decoding center, probably blocks exit of the E-site tRNA. The protein is Small ribosomal subunit protein uS7 of Tropheryma whipplei (strain TW08/27) (Whipple's bacillus).